Here is a 486-residue protein sequence, read N- to C-terminus: Glutamyl-tRNA(Gln) amidotransferase subunit A (486 aa).

Active-site charge relay system residues include Lys78 and Ser153. Ser177 acts as the Acyl-ester intermediate in catalysis.

It belongs to the amidase family. GatA subfamily. In terms of assembly, heterotrimer of A, B and C subunits.

The enzyme catalyses L-glutamyl-tRNA(Gln) + L-glutamine + ATP + H2O = L-glutaminyl-tRNA(Gln) + L-glutamate + ADP + phosphate + H(+). Allows the formation of correctly charged Gln-tRNA(Gln) through the transamidation of misacylated Glu-tRNA(Gln) in organisms which lack glutaminyl-tRNA synthetase. The reaction takes place in the presence of glutamine and ATP through an activated gamma-phospho-Glu-tRNA(Gln). The protein is Glutamyl-tRNA(Gln) amidotransferase subunit A of Desulfosudis oleivorans (strain DSM 6200 / JCM 39069 / Hxd3) (Desulfococcus oleovorans).